Reading from the N-terminus, the 132-residue chain is Hydrogenase maturation factor HypA (132 aa).

His-2 contributes to the Ni(2+) binding site. Zn(2+)-binding residues include Cys-74, Cys-77, Cys-91, and Cys-94.

The protein belongs to the HypA/HybF family.

Involved in the maturation of [NiFe] hydrogenases. Required for nickel insertion into the metal center of the hydrogenase. The protein is Hydrogenase maturation factor HypA of Synechococcus sp. (strain JA-2-3B'a(2-13)) (Cyanobacteria bacterium Yellowstone B-Prime).